Reading from the N-terminus, the 80-residue chain is Myocilin opposite strand protein (80 aa).

The interval 53-80 is disordered; the sequence is EQAPPPHRTYLTVPPAPPPSPAEDPTVS.

This chain is Myocilin opposite strand protein, found in Homo sapiens (Human).